Here is a 411-residue protein sequence, read N- to C-terminus: Adenylosuccinate synthetase (411 aa).

GTP is bound by residues 11 to 17 (GDEGKGK) and 39 to 41 (GHT). The active-site Proton acceptor is the aspartate 12. Mg(2+) is bound by residues aspartate 12 and glycine 39. IMP-binding positions include 12–15 (DEGK), 37–40 (NAGH), threonine 121, arginine 135, glutamine 215, threonine 230, and arginine 294. Catalysis depends on histidine 40, which acts as the Proton donor. Residue 290-296 (TTTKRPR) coordinates substrate. GTP-binding positions include arginine 296, 322–324 (KLD), and 400–402 (STS).

It belongs to the adenylosuccinate synthetase family. As to quaternary structure, homodimer. The cofactor is Mg(2+).

The protein resides in the cytoplasm. It catalyses the reaction IMP + L-aspartate + GTP = N(6)-(1,2-dicarboxyethyl)-AMP + GDP + phosphate + 2 H(+). The protein operates within purine metabolism; AMP biosynthesis via de novo pathway; AMP from IMP: step 1/2. In terms of biological role, plays an important role in the de novo pathway of purine nucleotide biosynthesis. Catalyzes the first committed step in the biosynthesis of AMP from IMP. This Helicobacter pylori (strain ATCC 700392 / 26695) (Campylobacter pylori) protein is Adenylosuccinate synthetase.